We begin with the raw amino-acid sequence, 135 residues long: MESFVAMKVVCILFLFVVAAEAASTKESPAVNPSKGKDRIKFNFPRYVPNHHVFASNLLKLCTEYTPETQARNDGSQATYKPRINDLQVNFKNCTFLCKREFGNVTLNLPVDTPCGPNKQTCADKSKCVGHIPGC.

Residues 1–22 (MESFVAMKVVCILFLFVVAAEA) form the signal peptide. 2 N-linked (GlcNAc...) asparagine glycosylation sites follow: Asn-93 and Asn-104. Residues 116–135 (GPNKQTCADKSKCVGHIPGC) are CD4-binding.

This sequence belongs to the salp15 family. Interacts with host CD4. Interacts with host DC-SIGN (CD209). In terms of assembly, (Microbial infection) Interacts with Borrelia outer surface protein C (OspC). Expressed in salivary glands from feeding female ticks. Highly expressed 4 days after start of feeding.

Its subcellular location is the secreted. In terms of biological role, salivary tick protein that downregulates host immune system by binding to both dendritic cells, and CD4(+) T cells. Specifically binds to the CD4 coreceptor on T cells. This interaction prevents the activation of the Src kinase, Lck, and its downstream substrate Zap-70, and results in deficient activation of PLCgamma1, the repression of calcium fluxes triggered by T-cell antigen receptor (TCR) ligation, and a subsequent reduction in interleukin-2 production. This salivary protein also binds to DC-SIGN (CD209) on dendritic cells (DC) and activates the Raf-1 kinase/MEK signaling pathway that results in down-regulating expression of pro-inflammatory cytokines. Furthermore, it inhibits T cell proliferation induced by DCs. It also inhibits in vitro keratinocyte inflammation induced by Borrelia burgdorferi or by the major outer surface protein (OspC) of Borrelia. In addition, it downregulates chemokines and monocyte chemoattractant protein 1, as well as several antimicrobial peptides such as defensins, cathelicidin, psoriasin, and RNase 7. Apart from its immunomodulatory activities, it is also associated with protection of Borrelia spirochetes from antibody-mediated killing through its binding to OspC. In vivo, tests on different immune disease animal models show promising therapeutic results, e.g., in inhibiting HIV infection, experimental autoimmune encephalomyelitis, transplantation rejection, and asthma. Its function is as follows. (Microbial infection) Protects Borrelia garinii from anti-Borrelia antibody-mediated cytotoxicity in vitro. May facilitate B.garinii transmission in mouse model. Functionally, (Microbial infection) Protects Borrelia burgdorferi from anti-Borrelia antibody-mediated cytotoxicity in vitro. (Microbial infection) Protects Borrelia afzelii from anti-Borrelia antibody-mediated cytotoxicity in vitro. The polypeptide is Salivary protein 15 Iper-1 (Ixodes persulcatus (Taiga tick)).